We begin with the raw amino-acid sequence, 361 residues long: Cilia- and flagella-associated protein 263 (361 aa).

This sequence belongs to the CFAP263 family. In terms of assembly, forms a complex with CFAP184; the interaction is required for functional activity in cilia.

It localises to the cell projection. The protein resides in the cilium. Its function is as follows. In complex with CFAP263, acts as a regulator of ciliary beating that connects radial spoke 3 (RS3) to the inner dynein arm (IDA) and the nexin-dynein regulatory complex (N-DRC). The complex is positioned parallel to N-DRC and forms a connection between the arch at the base of RS3, the IDA tail and N-DRC. In Tetrahymena thermophila (strain SB210), this protein is Cilia- and flagella-associated protein 263 (CFAP263).